The chain runs to 257 residues: Phosphatidylglycerol--prolipoprotein diacylglyceryl transferase (257 aa).

4 consecutive transmembrane segments (helical) span residues 12 to 32 (FSIR…VYLA), 49 to 69 (FILM…VIFE), 83 to 103 (IWNG…LLVI), and 109 to 129 (LINP…AQAI). A 1,2-diacyl-sn-glycero-3-phospho-(1'-sn-glycerol) is bound at residue Arg-131. Transmembrane regions (helical) follow at residues 167-187 (VPTF…IMSI), 197-217 (GEVA…IEGM), and 226-246 (GLRV…VMII).

The protein belongs to the Lgt family.

The protein localises to the cell membrane. It catalyses the reaction L-cysteinyl-[prolipoprotein] + a 1,2-diacyl-sn-glycero-3-phospho-(1'-sn-glycerol) = an S-1,2-diacyl-sn-glyceryl-L-cysteinyl-[prolipoprotein] + sn-glycerol 1-phosphate + H(+). It functions in the pathway protein modification; lipoprotein biosynthesis (diacylglyceryl transfer). Catalyzes the transfer of the diacylglyceryl group from phosphatidylglycerol to the sulfhydryl group of the N-terminal cysteine of a prolipoprotein, the first step in the formation of mature lipoproteins. The sequence is that of Phosphatidylglycerol--prolipoprotein diacylglyceryl transferase from Streptococcus agalactiae serotype Ia (strain ATCC 27591 / A909 / CDC SS700).